Here is a 363-residue protein sequence, read N- to C-terminus: Pyrimidine monooxygenase RutA (363 aa).

FMN contacts are provided by residues 49 to 50 (IK), Asn115, Glu124, 140 to 141 (RY), and Ser190.

It belongs to the NtaA/SnaA/DszA monooxygenase family. RutA subfamily.

The catalysed reaction is uracil + FMNH2 + NADH + O2 = (Z)-3-ureidoacrylate + FMN + NAD(+) + H2O + H(+). It carries out the reaction thymine + FMNH2 + NADH + O2 = (Z)-2-methylureidoacrylate + FMN + NAD(+) + H2O + H(+). Catalyzes the pyrimidine ring opening between N-3 and C-4 by an unusual flavin hydroperoxide-catalyzed mechanism, adding oxygen atoms in the process to yield ureidoacrylate peracid, that immediately reacts with FMN forming ureidoacrylate and FMN-N(5)-oxide. The FMN-N(5)-oxide reacts spontaneously with NADH to produce FMN. Requires the flavin reductase RutF to regenerate FMN in vivo. This Klebsiella pneumoniae (strain 342) protein is Pyrimidine monooxygenase RutA.